A 106-amino-acid polypeptide reads, in one-letter code: MKELQEHELDHIEDDVYLLYLYTPFCGTCQLASKMLTVVKEMLPDVAFYQNNVNYSPTFAKAYQIESVPCFLLFKGGKMVERGYAFHSVSYLYELIKQKSSSASHL.

One can recognise a Thioredoxin domain in the interval 1 to 101 (MKELQEHELD…LYELIKQKSS (101 aa)). An intrachain disulfide couples cysteine 26 to cysteine 29.

The protein is Thioredoxin-like protein YusE (yusE) of Bacillus subtilis (strain 168).